Here is a 338-residue protein sequence, read N- to C-terminus: Tetraacyldisaccharide 4'-kinase (338 aa).

67–74 (IAGGAGKT) contributes to the ATP binding site.

Belongs to the LpxK family.

It carries out the reaction a lipid A disaccharide + ATP = a lipid IVA + ADP + H(+). It participates in glycolipid biosynthesis; lipid IV(A) biosynthesis; lipid IV(A) from (3R)-3-hydroxytetradecanoyl-[acyl-carrier-protein] and UDP-N-acetyl-alpha-D-glucosamine: step 6/6. Transfers the gamma-phosphate of ATP to the 4'-position of a tetraacyldisaccharide 1-phosphate intermediate (termed DS-1-P) to form tetraacyldisaccharide 1,4'-bis-phosphate (lipid IVA). This chain is Tetraacyldisaccharide 4'-kinase, found in Acidovorax ebreus (strain TPSY) (Diaphorobacter sp. (strain TPSY)).